The sequence spans 341 residues: Holliday junction branch migration complex subunit RuvB (341 aa).

Positions 1 to 180 (MAKSHTLNPE…FGIQLRLDYY (180 aa)) are large ATPase domain (RuvB-L). ATP contacts are provided by Leu19, Arg20, Gly61, Lys64, Thr65, Thr66, Arg170, Tyr180, and Arg217. Thr65 is a Mg(2+) binding site. Positions 181–251 (NDEEMKQIVL…LCLKAFEKMG (71 aa)) are small ATPAse domain (RuvB-S). Positions 254-341 (DLGLDGMDRQ…VHHGQDPTLF (88 aa)) are head domain (RuvB-H). DNA-binding residues include Arg309 and Arg314.

The protein belongs to the RuvB family. As to quaternary structure, homohexamer. Forms an RuvA(8)-RuvB(12)-Holliday junction (HJ) complex. HJ DNA is sandwiched between 2 RuvA tetramers; dsDNA enters through RuvA and exits via RuvB. An RuvB hexamer assembles on each DNA strand where it exits the tetramer. Each RuvB hexamer is contacted by two RuvA subunits (via domain III) on 2 adjacent RuvB subunits; this complex drives branch migration. In the full resolvosome a probable DNA-RuvA(4)-RuvB(12)-RuvC(2) complex forms which resolves the HJ.

It is found in the cytoplasm. It catalyses the reaction ATP + H2O = ADP + phosphate + H(+). Functionally, the RuvA-RuvB-RuvC complex processes Holliday junction (HJ) DNA during genetic recombination and DNA repair, while the RuvA-RuvB complex plays an important role in the rescue of blocked DNA replication forks via replication fork reversal (RFR). RuvA specifically binds to HJ cruciform DNA, conferring on it an open structure. The RuvB hexamer acts as an ATP-dependent pump, pulling dsDNA into and through the RuvAB complex. RuvB forms 2 homohexamers on either side of HJ DNA bound by 1 or 2 RuvA tetramers; 4 subunits per hexamer contact DNA at a time. Coordinated motions by a converter formed by DNA-disengaged RuvB subunits stimulates ATP hydrolysis and nucleotide exchange. Immobilization of the converter enables RuvB to convert the ATP-contained energy into a lever motion, pulling 2 nucleotides of DNA out of the RuvA tetramer per ATP hydrolyzed, thus driving DNA branch migration. The RuvB motors rotate together with the DNA substrate, which together with the progressing nucleotide cycle form the mechanistic basis for DNA recombination by continuous HJ branch migration. Branch migration allows RuvC to scan DNA until it finds its consensus sequence, where it cleaves and resolves cruciform DNA. The chain is Holliday junction branch migration complex subunit RuvB from Leptospira interrogans serogroup Icterohaemorrhagiae serovar copenhageni (strain Fiocruz L1-130).